We begin with the raw amino-acid sequence, 200 residues long: Ribonuclease HII (200 aa).

Residues Leu-10–Phe-200 form the RNase H type-2 domain. 3 residues coordinate a divalent metal cation: Asp-16, Glu-17, and Asp-108.

Belongs to the RNase HII family. Mn(2+) serves as cofactor. It depends on Mg(2+) as a cofactor.

The protein resides in the cytoplasm. The catalysed reaction is Endonucleolytic cleavage to 5'-phosphomonoester.. Functionally, endonuclease that specifically degrades the RNA of RNA-DNA hybrids. This Bacteroides thetaiotaomicron (strain ATCC 29148 / DSM 2079 / JCM 5827 / CCUG 10774 / NCTC 10582 / VPI-5482 / E50) protein is Ribonuclease HII.